Reading from the N-terminus, the 60-residue chain is U1-theraphotoxin-Agm3a (60 aa).

The first 21 residues, 1 to 21 (MKFSVLVFILGLVLLLALSSA), serve as a signal peptide directing secretion. Positions 22–29 (TEMEENAR) are excised as a propeptide. 3 disulfides stabilise this stretch: cysteine 31–cysteine 45, cysteine 38–cysteine 50, and cysteine 44–cysteine 57.

Belongs to the neurotoxin 10 (Hwtx-1) family. 63 (VsTx1) subfamily. As to expression, expressed by the venom gland.

It is found in the secreted. Its function is as follows. Inhibits sodium channels Nav1.7/SCN9A and potassium channels Kv11.1/KCNH2. Also binds the voltage-sensor domain of the potassium channel KvAP (from the archaeon Aeropyrum pernix) with very slow apparent binding kinetics and affects channel gating. Reaches its target by dynamically partitioning into anionic or zwitterionic headgroup lipid membranes. May bind to the open state of KvAP. In Acanthoscurria gomesiana (Tarantula spider), this protein is U1-theraphotoxin-Agm3a.